Reading from the N-terminus, the 613-residue chain is Ribosome-associated molecular chaperone SSB1 (613 aa).

The interval 1–391 (MADGVFQGAI…ILTGQSTNDD (391 aa)) is nucleotide binding domain (NBD). Residues 16 to 18 (TTY), lysine 73, 205 to 207 (GGT), 271 to 278 (ERAKRSLS), and glycine 342 each bind ATP. Positions 392–402 (TKDLLLLDVIP) are inter-domain linker. Residues 403 to 613 (LSLGVAMQGN…RAVTKGMATR (211 aa)) form a substrate binding domain (SBD) region. Residues 516–612 (TEEIEKMISD…KRAVTKGMAT (97 aa)) are lid domain (SBDalpha). Positions 574–582 (IEAALSDAL) match the Nuclear export signal motif.

The protein belongs to the heat shock protein 70 family. Ssb-type Hsp70 subfamily. As to quaternary structure, binds to ribosomes. Binds close to the ribosomal tunnel exit via contacts with both ribosomal proteins and rRNA. Directly interacts with nascent polypeptides. This interaction is dependent on the ribosome-associated complex (RAC). Interacts with SSE1. Interacts with FES1.

The protein localises to the cytoplasm. The enzyme catalyses ATP + H2O = ADP + phosphate + H(+). Ribosome-bound, Hsp70-type chaperone that assists in the cotranslational folding of newly synthesized proteins in the cytosol. Stimulates folding by interacting with nascent chains, binding to short, largely hydrophobic sequences exposed by unfolded proteins, thereby stabilizing longer, more slowly translated, and aggregation-prone nascent polypeptides and domains that cannot fold stably until fully synthesized. The Hsp70-protein substrate interaction depends on ATP-binding and on allosteric regulation between the NBD and the SBD. The ATP-bound state is characterized by a fast exchange rate of substrate (low affinity state), while in the ADP-bound state exchange is much slower (high affinity state). During the Hsp70 cycle, the chaperone switches between the ATP-bound state (open conformation) and the ADP-bound state (closed conformation) by major conformational rearrangements involving mainly the lid domain. Ssb cooperates with a specific Hsp40/Hsp70 co-chaperone termed the ribosome-associated complex (RAC), which stimulates the ATPase activity of the ribosome-associated pool of Ssbs and switches it to the high affinity substrate binding state. Hsp110 chaperone SSE1 and FES1 act as nucleotide exchange factors that cause substrate release. This is Ribosome-associated molecular chaperone SSB1 (SSB1) from Candida albicans (strain WO-1) (Yeast).